We begin with the raw amino-acid sequence, 213 residues long: Uridine kinase (213 aa).

Position 14–21 (Gly14–Ser21) interacts with ATP.

The protein belongs to the uridine kinase family.

The protein resides in the cytoplasm. The catalysed reaction is uridine + ATP = UMP + ADP + H(+). It catalyses the reaction cytidine + ATP = CMP + ADP + H(+). It functions in the pathway pyrimidine metabolism; CTP biosynthesis via salvage pathway; CTP from cytidine: step 1/3. It participates in pyrimidine metabolism; UMP biosynthesis via salvage pathway; UMP from uridine: step 1/1. The sequence is that of Uridine kinase from Vibrio cholerae serotype O1 (strain ATCC 39315 / El Tor Inaba N16961).